The following is a 113-amino-acid chain: Photosystem II reaction center Psb28 protein (113 aa).

Belongs to the Psb28 family. Part of the photosystem II complex.

Its subcellular location is the cellular thylakoid membrane. This chain is Photosystem II reaction center Psb28 protein, found in Nostoc punctiforme (strain ATCC 29133 / PCC 73102).